Consider the following 837-residue polypeptide: V-type proton ATPase 116 kDa subunit a 1 (837 aa).

The Cytoplasmic portion of the chain corresponds to 1–388 (MGELFRSEEM…DAYGIGTYRE (388 aa)). Phosphothreonine occurs at positions 250 and 360. Residue Tyr364 is modified to Phosphotyrosine. The chain crosses the membrane as a helical span at residues 389 to 407 (INPAPYTIITFPFLFAVMF). Over 408 to 409 (GD) the chain is Vacuolar. A helical transmembrane segment spans residues 410 to 426 (FGHGILMTLFAVWMVLR). Over 427-441 (ESRILSQKNENEMFS) the chain is Cytoplasmic. The helical transmembrane segment at 442-471 (TVFSGRYIILLMGVFSMYTGLIYNDCFSKS) threads the bilayer. The Vacuolar segment spans residues 472 to 534 (LNIFGSSWSV…ATNKLTFLNS (63 aa)). A glycan (N-linked (GalNAc...) asparagine) is linked at Asn488. The helical transmembrane segment at 535-554 (FKMKMSVILGIIHMLFGVSL) threads the bilayer. The Cytoplasmic portion of the chain corresponds to 555–572 (SLFNHIYFKKPLNIYFGF). The helical transmembrane segment at 573–593 (IPEIIFMTSLFGYLVILIFYK) threads the bilayer. The Vacuolar portion of the chain corresponds to 594-638 (WTAYDAHTSENAPSLLIHFINMFLFSYPESGYSMLYSGQKGIQCF). The chain crosses the membrane as a helical span at residues 639–658 (LVVVALLCVPWMLLFKPLVL). Topologically, residues 659-724 (RRQYLRRKHL…DTMVHQAIHT (66 aa)) are cytoplasmic. Residues 725–749 (IEYCLGCISNTASYLRLWALSLAHA) traverse the membrane as a helical segment. Residues 750–770 (QLSEVLWTMVIHIGLSVKSLA) lie on the Vacuolar side of the membrane. A helical membrane pass occupies residues 771-809 (GGLVLFFFFTAFATLTVAILLIMEGLSAFLHALRLHWVE). Over 810–837 (FQNKFYSGTGFKFLPFSFEHIREGKFEE) the chain is Cytoplasmic.

The protein belongs to the V-ATPase 116 kDa subunit family. V-ATPase is a heteromultimeric enzyme made up of two complexes: the ATP-hydrolytic V1 complex and the proton translocation V0 complex. The V1 complex consists of three catalytic AB heterodimers that form a heterohexamer, three peripheral stalks each consisting of EG heterodimers, one central rotor including subunits D and F, and the regulatory subunits C and H. The proton translocation complex V0 consists of the proton transport subunit a, a ring of proteolipid subunits c9c'', rotary subunit d, subunits e and f, and the accessory subunits ATP6AP1/Ac45 and ATP6AP2/PRR. Interacts with SPAAR.

Its subcellular location is the cytoplasmic vesicle. It is found in the clathrin-coated vesicle membrane. The protein resides in the secretory vesicle. The protein localises to the synaptic vesicle membrane. It localises to the melanosome. In terms of biological role, subunit of the V0 complex of vacuolar(H+)-ATPase (V-ATPase), a multisubunit enzyme composed of a peripheral complex (V1) that hydrolyzes ATP and a membrane integral complex (V0) that transports protons across cellular membranes. V-ATPase is responsible for the acidification of various organelles, such as lysosomes, endosomes, the trans-Golgi network, and secretory granules, including synaptic vesicles. In certain cell types, can be exported to the plasma membrane, where it is involved in the acidification of the extracellular environment. Required for assembly and activity of the vacuolar ATPase. Through its action on compartment acidification, plays an essential role in neuronal development in terms of integrity and connectivity of neurons. The polypeptide is V-type proton ATPase 116 kDa subunit a 1 (ATP6V0A1) (Homo sapiens (Human)).